The chain runs to 317 residues: Transaldolase (317 aa).

Catalysis depends on Lys-132, which acts as the Schiff-base intermediate with substrate.

Belongs to the transaldolase family. Type 1 subfamily. As to quaternary structure, homodimer.

It is found in the cytoplasm. It carries out the reaction D-sedoheptulose 7-phosphate + D-glyceraldehyde 3-phosphate = D-erythrose 4-phosphate + beta-D-fructose 6-phosphate. It participates in carbohydrate degradation; pentose phosphate pathway; D-glyceraldehyde 3-phosphate and beta-D-fructose 6-phosphate from D-ribose 5-phosphate and D-xylulose 5-phosphate (non-oxidative stage): step 2/3. Functionally, transaldolase is important for the balance of metabolites in the pentose-phosphate pathway. This Yersinia pseudotuberculosis serotype O:1b (strain IP 31758) protein is Transaldolase.